A 768-amino-acid chain; its full sequence is MIRLIRWNNVQSLVFKRCLFVPSNSLTNKRKRRIPPSKPRSSNRKDGDIEPYRMTDQNQTPNTGSIARLPAEVKKELKDLRSFTKVIAQHLKPEQENDSLTSAEKPDTSQLPPIDIEEATDDIFGEISGTKKLSANAVPPPPPPPGLDIPDEIKERLGLLSELLVPAKTSNNKLPEKQVENNWKLLLSQLDQAGGLSGLSKRSVSKFFSKIPPKNLKNLIPMIENMYNKAEMSIPHPIYYMFVRSLTLGDKISDSQMQLINKYFQEISKQTDLKIDHYETMILAYVKNNHMEKIDGILAQMKKKNIEISKMIYTSIVRGYIFYQKDHQRALDTFDSMKFLSQKTQPDEKVYTDVIVSCVMHREIERALDLYYELKDKGMNVNQNLLSTLAKGCSRSKQFKTQAWNFLFQVYDHGWVPNLQTYEHMLYIAARDGDVELTRVLFYKMLQTNSVTIRAFRYLILSYSKYVPPHKRKEKHLILLNHKGQLFRQNILQDVDFSKPVHGFPFLPSSHIPDSKFVLAESSAIWAHTVMNNPSFLRQQTLVASYVSIALELGDFTEFKDRFDSASYLNTDGIPKVREIEIIEPRQDEPTEKATTTEEQNASSETDNNSLIRSPILNQLQQNINDNQFKAPRDSYLYNLAIKAAGKFKNYGFAQEILHERGQFRKSNSFKLLSPKQQNQDDFQFAGYLVECWTNMNLLEDAYAVVLSSVDRFPWSWRELGVLNNAAMKLGSLELAEAVRKVAQVTQVKHHGKIKRQDFKTYVMKRGY.

A mitochondrion-targeting transit peptide spans 1–90 (MIRLIRWNNV…RSFTKVIAQH (90 aa)). Disordered regions lie at residues 28–65 (NKRK…NTGS) and 90–114 (HLKP…LPPI). Basic and acidic residues predominate over residues 43–53 (NRKDGDIEPYR). Positions 55-65 (TDQNQTPNTGS) are enriched in polar residues. PPR repeat units lie at residues 274–308 (KIDH…NIEI), 309–344 (SKMI…SQKT), 347–381 (DEKV…GMNV), 382–417 (NQNL…GWVP), and 418–452 (NLQT…NSVT). The segment covering 583–596 (IEPRQDEPTEKATT) has biased composition (basic and acidic residues). A disordered region spans residues 583-609 (IEPRQDEPTEKATTTEEQNASSETDNN). Polar residues predominate over residues 597-609 (TEEQNASSETDNN). A PPR 6 repeat occupies 634-664 (DSYLYNLAIKAAGKFKNYGFAQEILHERGQF).

Belongs to the CCM1 family. Binds to mitochondrial small subunit 15S rRNA.

The protein localises to the mitochondrion. In terms of biological role, regulates mitochondrial small subunit maturation by controlling 15S rRNA 5'-end processing. Localizes to the 5' precursor of the 15S rRNA in a position that is subsequently occupied by mS47 in the mature yeast mtSSU. Uses structure and sequence-specific RNA recognition, binding to a single-stranded region of the precursor and specifically recognizing bases -6 to -1. The exchange of Ccm1 for mS47 is coupled to the irreversible removal of precursor rRNA that is accompanied by conformational changes of the mitoribosomal proteins uS5m and mS26. These conformational changes signal completion of 5'-end rRNA processing through protection of the mature 5'-end of the 15S rRNA and stabilization of mS47. The removal of the 5' precursor together with the dissociation of Ccm1 may be catalyzed by the 5'-3' exoribonuclease Pet127. Involved in the specific removal of group I introns in mitochondrial encoded transcripts. This Candida albicans (strain SC5314 / ATCC MYA-2876) (Yeast) protein is Mitochondrial 15S rRNA processing factor CCM1 (CCM1).